The sequence spans 647 residues: Zinc finger CCCH domain-containing protein 19 (647 aa).

C3H1-type zinc fingers lie at residues 16-45 (RRRSTDCIYFLASPLTCKKGSECEYRHSDA) and 47-73 (RMNPRDCWYWFNGNCANPKCSFRHPPL). Residues 78–106 (GAPTTPRTSQQSAPQVSVPAQAPVPNPAS) are disordered. Residues 86-106 (SQQSAPQVSVPAQAPVPNPAS) are compositionally biased toward low complexity. Residues 109–136 (AKQGVPCYYFQKGMCVKGDRCAFLHLPQ) form a C3H1-type 3 zinc finger. Disordered stretches follow at residues 155–280 (VPHP…RTNG), 308–327 (LSESRFSQREPMPLTADSSD), 335–452 (QRRL…DAES), 512–580 (LKRK…LSPA), and 586–605 (EAADDASRELEEQQDVETAE). Polar residues-rich tracts occupy residues 160 to 175 (LKNSWTKPNSSAQQNA) and 189 to 203 (NGKTAQKQNLTNRAG). Residues 267–280 (SLREDRGAYRRTNG) are compositionally biased toward basic and acidic residues. The span at 347-359 (SDRHNVYPEDERH) shows a compositional bias: basic and acidic residues. Residues 369 to 379 (QASNDGVSSSR) are compositionally biased toward polar residues. Positions 419–433 (LRGKLHDRLKAKPNE) are enriched in basic and acidic residues. Over residues 435 to 445 (VSGNVQSSLSK) the composition is skewed to polar residues. The segment covering 527–536 (GSKREEHSGG) has biased composition (basic and acidic residues).

The sequence is that of Zinc finger CCCH domain-containing protein 19 from Oryza sativa subsp. japonica (Rice).